A 152-amino-acid polypeptide reads, in one-letter code: Siroheme decarboxylase NirD subunit (152 aa).

It belongs to the Ahb/Nir family. Probably forms a complex composed of NirD, NirL, NirG and NirH. All proteins are required for the total conversion of siroheme to didecarboxysiroheme.

It catalyses the reaction siroheme + 2 H(+) = 12,18-didecarboxysiroheme + 2 CO2. Its pathway is porphyrin-containing compound metabolism. Its function is as follows. Involved in heme d1 biosynthesis. Catalyzes the decarboxylation of siroheme into didecarboxysiroheme. This is Siroheme decarboxylase NirD subunit from Stutzerimonas stutzeri (Pseudomonas stutzeri).